Reading from the N-terminus, the 216-residue chain is Pyrrolidone-carboxylate peptidase (216 aa).

Residues Glu80, Cys143, and His167 contribute to the active site.

This sequence belongs to the peptidase C15 family. As to quaternary structure, homotetramer.

It is found in the cytoplasm. It catalyses the reaction Release of an N-terminal pyroglutamyl group from a polypeptide, the second amino acid generally not being Pro.. Functionally, removes 5-oxoproline from various penultimate amino acid residues except L-proline. This Streptomyces coelicolor (strain ATCC BAA-471 / A3(2) / M145) protein is Pyrrolidone-carboxylate peptidase (pcp).